A 274-amino-acid polypeptide reads, in one-letter code: Nickel/cobalt efflux system RcnA (274 aa).

The Periplasmic portion of the chain corresponds to 1-12 (MTEFTTLLQQGN). A helical transmembrane segment spans residues 13 to 33 (AWFFIPSAILLGALHGLEPGH). At 34–56 (SKTMMAAFIIAIKGTIKQAVMLG) the chain is on the cytoplasmic side. The helical transmembrane segment at 57 to 77 (LAATISHTAVVWLIAFGGMVI) threads the bilayer. Over 78–86 (SKRFTAQSA) the chain is Periplasmic. The helical transmembrane segment at 87-107 (EPWLQLISAVIIISTAFWMFW) threads the bilayer. Residues 108–174 (RTWRGERNWL…FDGREVTNWQ (67 aa)) lie on the Cytoplasmic side of the membrane. Positions 127–137 (HHHHDHEDHHD) are enriched in basic and acidic residues. Residues 127–153 (HHHHDHEDHHDHGHHHHHEHGEYQDAH) form a disordered region. The helical transmembrane segment at 175-195 (ILLFGLTGGLIPCPAAITVLL) threads the bilayer. Topologically, residues 196–209 (ICIQLKALTLGATL) are periplasmic. A helical transmembrane segment spans residues 210–230 (VVSFSLGLALTLVTVSVGAAI). The Cytoplasmic segment spans residues 231 to 251 (SVQQVAKRWSGFNTLAKRAPY). The helical transmembrane segment at 252–272 (FSSLLIGLVGVYMGVHGFMGI) threads the bilayer. Topologically, residues 273-274 (MR) are periplasmic.

Belongs to the NiCoT transporter (TC 2.A.52) family. RcnA subfamily.

It is found in the cell inner membrane. Functionally, efflux system for nickel and cobalt. This is Nickel/cobalt efflux system RcnA (rcnA) from Escherichia coli O6:K15:H31 (strain 536 / UPEC).